A 105-amino-acid polypeptide reads, in one-letter code: Venom metalloprotease inhibitor (105 aa).

The signal sequence occupies residues 1–21; it reads MFRFVCVLFIALVVFCTTTSA. 5 cysteine pairs are disulfide-bonded: Cys-26–Cys-61, Cys-35–Cys-57, Cys-39–Cys-50, Cys-43–Cys-83, and Cys-63–Cys-77. Residues 26-83 enclose the TIL domain; the sequence is CNRPNEEYRCGSACQTTCATLGQRCPIMNIRCNDACYCKEGYARYGDDTGMCVSISQC.

Belongs to the serine protease inhibitor-like (TIL domain-containing) family. In terms of tissue distribution, expressed by the venom gland.

Its subcellular location is the secreted. Functionally, inhibits metalloprotease (human MMP3), trypsin, chymotrypsin, plasmin and microbial serine protease (proteinase K). Exhibits antifibrinolytic activity by binding plasmin and inhibiting it. Does not inhibit elastase, thrombin or microbial serine protease (subtilisin A). In Bombus ignitus (Bumblebee), this protein is Venom metalloprotease inhibitor.